We begin with the raw amino-acid sequence, 529 residues long: Probable pectinesterase/pectinesterase inhibitor 35 (529 aa).

A signal peptide spans methionine 1 to alanine 34. The tract at residues serine 36 to methionine 180 is pectinesterase inhibitor 35. The interval threonine 42–lysine 64 is disordered. A compositionally biased stretch (low complexity) spans serine 50–lysine 64. 3 N-linked (GlcNAc...) asparagine glycosylation sites follow: asparagine 86, asparagine 169, and asparagine 193. The segment at histidine 228–asparagine 514 is pectinesterase 35. Residues threonine 302 and glutamine 332 each coordinate substrate. The active-site Proton donor; for pectinesterase activity is aspartate 355. Aspartate 376 serves as the catalytic Nucleophile; for pectinesterase activity. Substrate contacts are provided by arginine 434 and tryptophan 436.

The protein in the N-terminal section; belongs to the PMEI family. This sequence in the C-terminal section; belongs to the pectinesterase family. In terms of tissue distribution, expressed in siliques.

Its subcellular location is the secreted. It is found in the cell wall. It carries out the reaction [(1-&gt;4)-alpha-D-galacturonosyl methyl ester](n) + n H2O = [(1-&gt;4)-alpha-D-galacturonosyl](n) + n methanol + n H(+). Its pathway is glycan metabolism; pectin degradation; 2-dehydro-3-deoxy-D-gluconate from pectin: step 1/5. In terms of biological role, acts in the modification of cell walls via demethylesterification of cell wall pectin. The sequence is that of Probable pectinesterase/pectinesterase inhibitor 35 (PME35) from Arabidopsis thaliana (Mouse-ear cress).